The primary structure comprises 332 residues: L-lactate dehydrogenase A chain (332 aa).

NAD(+)-binding positions include 29–57 and Arg99; that span reads GMVGMASAISVLLKDLCDELALVDVMEEK. Residues Arg106, Asn138, and Arg169 each coordinate substrate. Asn138 contributes to the NAD(+) binding site. The active-site Proton acceptor is the His193. A substrate-binding site is contributed by Thr248.

Belongs to the LDH/MDH superfamily. LDH family. Homotetramer.

Its subcellular location is the cytoplasm. The enzyme catalyses (S)-lactate + NAD(+) = pyruvate + NADH + H(+). The protein operates within fermentation; pyruvate fermentation to lactate; (S)-lactate from pyruvate: step 1/1. Interconverts simultaneously and stereospecifically pyruvate and lactate with concomitant interconversion of NADH and NAD(+). The polypeptide is L-lactate dehydrogenase A chain (ldha) (Lycodichthys dearborni (Antarctic eelpout)).